The chain runs to 628 residues: Phosphomethylpyrimidine synthase (628 aa).

A disordered region spans residues 1-22; the sequence is MSKQEKTINLSESAQVDQQSVQ. Polar residues predominate over residues 7–22; it reads TINLSESAQVDQQSVQ. Substrate contacts are provided by residues Asn232, Met261, Tyr290, His326, 346–348, 387–390, and Glu426; these read SRG and DGLR. His430 serves as a coordination point for Zn(2+). Tyr453 is a substrate binding site. Residue His494 participates in Zn(2+) binding. The [4Fe-4S] cluster site is built by Cys574, Cys577, and Cys582.

Belongs to the ThiC family. Homodimer. [4Fe-4S] cluster serves as cofactor.

It catalyses the reaction 5-amino-1-(5-phospho-beta-D-ribosyl)imidazole + S-adenosyl-L-methionine = 4-amino-2-methyl-5-(phosphooxymethyl)pyrimidine + CO + 5'-deoxyadenosine + formate + L-methionine + 3 H(+). Its pathway is cofactor biosynthesis; thiamine diphosphate biosynthesis. Its function is as follows. Catalyzes the synthesis of the hydroxymethylpyrimidine phosphate (HMP-P) moiety of thiamine from aminoimidazole ribotide (AIR) in a radical S-adenosyl-L-methionine (SAM)-dependent reaction. The sequence is that of Phosphomethylpyrimidine synthase from Pseudomonas putida (strain W619).